Here is a 395-residue protein sequence, read N- to C-terminus: ATP phosphoribosyltransferase regulatory subunit (395 aa).

The protein belongs to the class-II aminoacyl-tRNA synthetase family. HisZ subfamily. Heteromultimer composed of HisG and HisZ subunits.

The protein resides in the cytoplasm. It participates in amino-acid biosynthesis; L-histidine biosynthesis; L-histidine from 5-phospho-alpha-D-ribose 1-diphosphate: step 1/9. Functionally, required for the first step of histidine biosynthesis. May allow the feedback regulation of ATP phosphoribosyltransferase activity by histidine. This chain is ATP phosphoribosyltransferase regulatory subunit, found in Azotobacter vinelandii (strain DJ / ATCC BAA-1303).